The primary structure comprises 600 residues: UvrABC system protein C (600 aa).

Positions Asp15–Val92 constitute a GIY-YIG domain. The UVR domain occupies Ser197 to Thr232.

This sequence belongs to the UvrC family. As to quaternary structure, interacts with UvrB in an incision complex.

It is found in the cytoplasm. In terms of biological role, the UvrABC repair system catalyzes the recognition and processing of DNA lesions. UvrC both incises the 5' and 3' sides of the lesion. The N-terminal half is responsible for the 3' incision and the C-terminal half is responsible for the 5' incision. The chain is UvrABC system protein C from Lactobacillus gasseri (strain ATCC 33323 / DSM 20243 / BCRC 14619 / CIP 102991 / JCM 1131 / KCTC 3163 / NCIMB 11718 / NCTC 13722 / AM63).